A 467-amino-acid polypeptide reads, in one-letter code: 3-isopropylmalate dehydratase large subunit (467 aa).

Residues cysteine 347, cysteine 407, and cysteine 410 each contribute to the [4Fe-4S] cluster site.

It belongs to the aconitase/IPM isomerase family. LeuC type 1 subfamily. In terms of assembly, heterodimer of LeuC and LeuD. [4Fe-4S] cluster serves as cofactor.

The catalysed reaction is (2R,3S)-3-isopropylmalate = (2S)-2-isopropylmalate. It functions in the pathway amino-acid biosynthesis; L-leucine biosynthesis; L-leucine from 3-methyl-2-oxobutanoate: step 2/4. Its function is as follows. Catalyzes the isomerization between 2-isopropylmalate and 3-isopropylmalate, via the formation of 2-isopropylmaleate. This chain is 3-isopropylmalate dehydratase large subunit, found in Gloeothece citriformis (strain PCC 7424) (Cyanothece sp. (strain PCC 7424)).